The following is a 186-amino-acid chain: MVPFWAGLLVLSALPQTLGFLQHSEEPYVPGEWVLLHVVQGHIGAGNYSYLRLNHEGRIILHMQSLKGDADLYVSDKTLRPNFDTYKLQSTTCGPDVVVVPGDFLRPVGIGIYGHPSYMESEFEMKVFYDQKALAEIEIEKNSYSSDETPGQPRQSQGPEDTEEEEESILWTILIGILKIILEILF.

An N-terminal signal peptide occupies residues 1–19 (MVPFWAGLLVLSALPQTLG). N-linked (GlcNAc...) asparagine glycosylation occurs at Asn47. Residues 141-165 (KNSYSSDETPGQPRQSQGPEDTEEE) form a disordered region. The span at 142–159 (NSYSSDETPGQPRQSQGP) shows a compositional bias: polar residues.

The protein belongs to the UPF0669 family.

It is found in the secreted. The sequence is that of UPF0669 protein C6orf120 homolog from Danio rerio (Zebrafish).